The primary structure comprises 317 residues: MPMQGAQRRLLGSLNSIPTATPNLGLAANHTGAPCLEVSIPDWLFLSLGLVSLVQNVLVVAAIAKNRNLHSPMYCFICCLALSDLLVSGSNMLETAVILMLEAGALATRASVVQQLQNTIDVLTCSSMLCSLCFLGAIALDRYVSIFYALRYHSIVTLPRARRAIAATWVASVLSSTLFIAYCDHAAVLLCLVVFFLAMLVLMAVLYVHMLARACQHAQGITRLHKRQLPAHQGFGLRGAATLTILLGIFFLCWGPFFLHLMLVVLCPQHLTCSCIFKNFKVFLTLIICNTIIDPLIYAFRSQELCRTLKEVLLCSW.

The Extracellular segment spans residues Met-1 to Glu-37. Asn-29 carries an N-linked (GlcNAc...) asparagine glycan. Residues Val-38 to Ile-63 form a helical membrane-spanning segment. At Ala-64 to Pro-72 the chain is on the cytoplasmic side. A helical membrane pass occupies residues Met-73 to Leu-93. At Glu-94 to Asn-118 the chain is on the extracellular side. The helical transmembrane segment at Thr-119–Leu-140 threads the bilayer. Over Asp-141–Arg-163 the chain is Cytoplasmic. A helical membrane pass occupies residues Ala-164–Cys-183. At Asp-184–Cys-191 the chain is on the extracellular side. Residues Leu-192–Leu-211 form a helical membrane-spanning segment. The Cytoplasmic portion of the chain corresponds to Ala-212–Ala-240. Residues Ala-241 to Leu-266 form a helical membrane-spanning segment. Topologically, residues Cys-267–Asn-279 are extracellular. The helical transmembrane segment at Phe-280–Phe-300 threads the bilayer. Over Arg-301–Trp-317 the chain is Cytoplasmic. A lipid anchor (S-palmitoyl cysteine) is attached at Cys-315.

It belongs to the G-protein coupled receptor 1 family. Interacts with MGRN1, but does not undergo MGRN1-mediated ubiquitination; this interaction competes with GNAS-binding and thus inhibits agonist-induced cAMP production. Interacts with OPN3; the interaction results in a decrease in MC1R-mediated cAMP signaling and ultimately a decrease in melanin production in melanocytes.

The protein resides in the cell membrane. Receptor for MSH (alpha, beta and gamma) and ACTH. The activity of this receptor is mediated by G proteins which activate adenylate cyclase. Mediates melanogenesis, the production of eumelanin (black/brown) and phaeomelanin (red/yellow), via regulation of cAMP signaling in melanocytes. The chain is Melanocyte-stimulating hormone receptor (MC1R) from Alouatta seniculus (Red howler monkey).